The following is a 175-amino-acid chain: Large ribosomal subunit protein uL10 (175 aa).

It belongs to the universal ribosomal protein uL10 family. As to quaternary structure, part of the ribosomal stalk of the 50S ribosomal subunit. The N-terminus interacts with L11 and the large rRNA to form the base of the stalk. The C-terminus forms an elongated spine to which L12 dimers bind in a sequential fashion forming a multimeric L10(L12)X complex.

Functionally, forms part of the ribosomal stalk, playing a central role in the interaction of the ribosome with GTP-bound translation factors. The polypeptide is Large ribosomal subunit protein uL10 (Methylobacterium nodulans (strain LMG 21967 / CNCM I-2342 / ORS 2060)).